The following is a 571-amino-acid chain: Quinone-dependent D-lactate dehydrogenase (571 aa).

An FAD-binding PCMH-type domain is found at 42-213; the sequence is GQGDALAVVF…SKLDDDRIKD (172 aa). FAD contacts are provided by residues 76–80, 84–85, Gly143, Ser150, Gly160, and Val262; these read AANTG and GS. Residues 546–571 form a disordered region; sequence RENDPTNSMNPGIGKTSKRKNWQEVE.

This sequence belongs to the quinone-dependent D-lactate dehydrogenase family. It depends on FAD as a cofactor.

Its subcellular location is the cell inner membrane. The catalysed reaction is (R)-lactate + a quinone = a quinol + pyruvate. Inhibited by 2-hydroxy-3-butynoic acid, but not by p-chloromercuribenzoate, n-ethylmaleimide, or 5,5'-dithiobis(2-nitrobenzoic acid). In terms of biological role, catalyzes the oxidation of D-lactate to pyruvate. Electrons derived from D-lactate oxidation are transferred to the ubiquinone/cytochrome electron transfer chain, where they may be used to provide energy for the active transport of a variety of amino acids and sugars across the membrane. This is Quinone-dependent D-lactate dehydrogenase from Escherichia coli (strain K12).